The following is a 483-amino-acid chain: Aspartyl/glutamyl-tRNA(Asn/Gln) amidotransferase subunit B (483 aa).

Belongs to the GatB/GatE family. GatB subfamily. Heterotrimer of A, B and C subunits.

It carries out the reaction L-glutamyl-tRNA(Gln) + L-glutamine + ATP + H2O = L-glutaminyl-tRNA(Gln) + L-glutamate + ADP + phosphate + H(+). It catalyses the reaction L-aspartyl-tRNA(Asn) + L-glutamine + ATP + H2O = L-asparaginyl-tRNA(Asn) + L-glutamate + ADP + phosphate + 2 H(+). Its function is as follows. Allows the formation of correctly charged Asn-tRNA(Asn) or Gln-tRNA(Gln) through the transamidation of misacylated Asp-tRNA(Asn) or Glu-tRNA(Gln) in organisms which lack either or both of asparaginyl-tRNA or glutaminyl-tRNA synthetases. The reaction takes place in the presence of glutamine and ATP through an activated phospho-Asp-tRNA(Asn) or phospho-Glu-tRNA(Gln). The chain is Aspartyl/glutamyl-tRNA(Asn/Gln) amidotransferase subunit B from Roseiflexus castenholzii (strain DSM 13941 / HLO8).